A 303-amino-acid polypeptide reads, in one-letter code: Centromere protein O (303 aa).

Residues 38–77 (AALRKNQELVLELRKKRDELKAKIERHKAEIQAFRGREEA) adopt a coiled-coil conformation.

The protein belongs to the CENP-O/MCM21 family.

It is found in the nucleus. The protein localises to the chromosome. It localises to the centromere. Probable component of a centromeric complex involved in assembly of kinetochore proteins, mitotic progression and chromosome segregation. The chain is Centromere protein O (cenpo) from Xenopus tropicalis (Western clawed frog).